The sequence spans 204 residues: uncharacterized protein (204 aa).

This is an uncharacterized protein from Caenorhabditis elegans.